The sequence spans 1896 residues: Obscurin-like protein 1 (1896 aa).

Position 10 is a phosphoserine (S10). The 89-residue stretch at 12 to 100 (PCFLRFPRPV…GEAYAAAAVT (89 aa)) folds into the Ig-like 1 domain. The segment at 17 to 19 (FPR) is interaction with TTN. C33 and C84 form a disulfide bridge. The interval 85–94 (RARNAAGEAY) is interaction with TTN. Positions 106 to 127 (ASDPELQPAERPLPSPGSGEGA) are disordered. Ig-like domains lie at 128–225 (PVFL…ALLQ), 243–330 (PVVE…QTLS), and 339–425 (PRLR…ANVT). 3 disulfides stabilise this stretch: C149-C209, C267-C319, and C362-C412. One can recognise a Fibronectin type-III domain in the interval 517–615 (PPGPPILAEM…FHGSAHLVPT (99 aa)). Ig-like domains follow at residues 714-800 (PVHI…FGVT), 804-893 (PPVH…VTIT), 902-982 (PSGK…FTVT), 986-1075 (PPVR…VTVT), 1078-1172 (PERI…PPVQ), 1174-1261 (LALE…FTVQ), 1265-1357 (PPVR…VEEP), 1357-1534 (PLLV…ARLS), 1628-1720 (PVTI…RTVA), and 1794-1896 (PAQS…VEGN). 6 cysteine pairs are disulfide-bonded: C738/C788, C829/C879, C920/C970, C1011/C1061, C1103/C1153, and C1195/C1245. Disulfide bonds link C1381–C1522 and C1650–C1700.

Component of the 3M complex, composed of core components CUL7, CCDC8 and OBSL1. Interacts with CCDC8. Interacts with CUL7; the interaction is direct. Interacts with FBXW8. Interacts (via N-terminal Ig-like domain) with TTN/titin (via C-terminal Ig-like domain); the interaction is direct. Widely expressed, with predominant levels found in the heart.

It is found in the cytoplasm. It localises to the cytoskeleton. Its subcellular location is the microtubule organizing center. The protein resides in the centrosome. The protein localises to the perinuclear region. It is found in the golgi apparatus. In terms of biological role, core component of the 3M complex, a complex required to regulate microtubule dynamics and genome integrity. It is unclear how the 3M complex regulates microtubules, it could act by controlling the level of a microtubule stabilizer. Acts as a regulator of the Cul7-RING(FBXW8) ubiquitin-protein ligase, playing a critical role in the ubiquitin ligase pathway that regulates Golgi morphogenesis and dendrite patterning in brain. Required to localize CUL7 to the Golgi apparatus in neurons. The polypeptide is Obscurin-like protein 1 (Homo sapiens (Human)).